The chain runs to 396 residues: 1-deoxy-D-xylulose 5-phosphate reductoisomerase (396 aa).

8 residues coordinate NADPH: Thr-10, Gly-11, Ser-12, Ile-13, Gly-36, Lys-37, Asn-38, and Asn-124. Lys-125 is a 1-deoxy-D-xylulose 5-phosphate binding site. NADPH is bound at residue Glu-126. Asp-150 is a binding site for Mn(2+). 1-deoxy-D-xylulose 5-phosphate is bound by residues Ser-151, Glu-152, Ser-186, and His-209. Glu-152 is a binding site for Mn(2+). Gly-215 serves as a coordination point for NADPH. Residues Ser-222, Asn-227, Lys-228, and Glu-231 each coordinate 1-deoxy-D-xylulose 5-phosphate. Glu-231 provides a ligand contact to Mn(2+).

The protein belongs to the DXR family. The cofactor is Mg(2+). Requires Mn(2+) as cofactor.

The catalysed reaction is 2-C-methyl-D-erythritol 4-phosphate + NADP(+) = 1-deoxy-D-xylulose 5-phosphate + NADPH + H(+). The protein operates within isoprenoid biosynthesis; isopentenyl diphosphate biosynthesis via DXP pathway; isopentenyl diphosphate from 1-deoxy-D-xylulose 5-phosphate: step 1/6. In terms of biological role, catalyzes the NADPH-dependent rearrangement and reduction of 1-deoxy-D-xylulose-5-phosphate (DXP) to 2-C-methyl-D-erythritol 4-phosphate (MEP). The chain is 1-deoxy-D-xylulose 5-phosphate reductoisomerase from Haemophilus ducreyi (strain 35000HP / ATCC 700724).